Consider the following 942-residue polypeptide: Inter-alpha-trypsin inhibitor heavy chain H5 (942 aa).

An N-terminal signal peptide occupies residues Met-1–Gly-16. The VIT domain maps to Val-35–Glu-161. Asn-97 and Asn-127 each carry an N-linked (GlcNAc...) asparagine glycan. Disordered stretches follow at residues Lys-116–Lys-136 and Ser-208–Val-227. N-linked (GlcNAc...) asparagine glycans are attached at residues Asn-231, Asn-421, and Asn-508. The region spanning Asn-295–Ile-478 is the VWFA domain. Residues Gln-550–Asn-571 are disordered. Residues Asn-776, Asn-795, and Asn-862 are each glycosylated (N-linked (GlcNAc...) asparagine).

It belongs to the ITIH family. In terms of tissue distribution, abundantly expressed in placenta. Less abundant expression in mammary gland and ovary. Expression is barely detectable levels in all other tissues tested.

It is found in the secreted. Its function is as follows. May act as a tumor suppressor. The chain is Inter-alpha-trypsin inhibitor heavy chain H5 (ITIH5) from Homo sapiens (Human).